The following is a 228-amino-acid chain: Lipoprotein-releasing system ATP-binding protein LolD (228 aa).

Residues 8-228 (LQAKKLVKAY…ELHDGLLRRL (221 aa)) form the ABC transporter domain. 44 to 51 (GASGSGKS) provides a ligand contact to ATP.

It belongs to the ABC transporter superfamily. Lipoprotein translocase (TC 3.A.1.125) family. In terms of assembly, the complex is composed of two ATP-binding proteins (LolD) and two transmembrane proteins (LolC and LolE).

Its subcellular location is the cell inner membrane. Its function is as follows. Part of the ABC transporter complex LolCDE involved in the translocation of mature outer membrane-directed lipoproteins, from the inner membrane to the periplasmic chaperone, LolA. Responsible for the formation of the LolA-lipoprotein complex in an ATP-dependent manner. This chain is Lipoprotein-releasing system ATP-binding protein LolD, found in Alcanivorax borkumensis (strain ATCC 700651 / DSM 11573 / NCIMB 13689 / SK2).